A 783-amino-acid polypeptide reads, in one-letter code: Zinc finger protein 107 (783 aa).

Residues 76-98 (FQCNKYVKVFDKFSNSNRYKRRH) form a C2H2-type 1; atypical zinc finger. 3 C2H2-type zinc fingers span residues 104 to 126 (FKCK…RRIH), 132 to 154 (YKCE…KRIH), and 160 to 182 (YKCE…KIIH). A Glycyl lysine isopeptide (Lys-Gly) (interchain with G-Cter in SUMO2) cross-link involves residue Lys186. A C2H2-type 5 zinc finger spans residues 188–210 (NKCEECGKAFKQASHLTIHKIIH). The C2H2-type 6; atypical zinc-finger motif lies at 216-238 (YKYEECGKVFSQSSHLTTQKILH). A C2H2-type 7 zinc finger spans residues 244 to 266 (YKCKECGKAFNLFSNLTNHKRIH). The C2H2-type 8; atypical zinc finger occupies 272–294 (YKCKECGRAFNISSNLNKQEKIH). The C2H2-type 9; atypical zinc-finger motif lies at 300 to 322 (NKCEECDKAFNRSLKLTAHKKIL). 2 consecutive C2H2-type zinc fingers follow at residues 328–350 (YKCE…KIIH) and 356–378 (YKCK…KKIH). The segment at 384–406 (YKCEECGKAFNQHSNLINHRKIY) adopts a C2H2-type 12; atypical zinc-finger fold. 4 C2H2-type zinc fingers span residues 412–434 (YKCE…KKIH), 440–462 (YKCE…KKIH), 468–490 (YKCE…KRIH), and 496–518 (YKCE…KIVH). The C2H2-type 17; atypical zinc finger occupies 524 to 546 (NKCEEFGKAFKQSSHRTIHKIIH). A C2H2-type 18; atypical zinc finger spans residues 552 to 574 (YKCEEHGKVFNQSSNLTTQKIIH). The segment at 580-602 (YKFEEHGKAFNLFSNITNHKIIY) adopts a C2H2-type 19; atypical zinc-finger fold. 5 C2H2-type zinc fingers span residues 608 to 630 (HKCE…KRIH), 636 to 658 (YQCA…KIIH), 664 to 686 (YKCK…KKIH), 692 to 714 (YKCE…KKIH), and 720 to 742 (YKCE…KIIH). A C2H2-type 25; atypical zinc finger spans residues 748–770 (YKCGDYGRAFNLSSNLTTHKKIH).

This sequence belongs to the krueppel C2H2-type zinc-finger protein family. In terms of tissue distribution, expressed in brain, heart, skeletal muscle, kidney and pancreas. Weakly expressed in aorta, liver and lung.

Its subcellular location is the nucleus. Its function is as follows. May be involved in transcriptional regulation. In Homo sapiens (Human), this protein is Zinc finger protein 107 (ZNF107).